Consider the following 457-residue polypeptide: Cysteine--tRNA ligase (457 aa).

A Zn(2+)-binding site is contributed by cysteine 29. Residues 31–41 (PTVYDNPHIGN) carry the 'HIGH' region motif. Cysteine 214, histidine 239, and glutamate 243 together coordinate Zn(2+). The short motif at 272–276 (KMSKS) is the 'KMSKS' region element. Lysine 275 provides a ligand contact to ATP.

This sequence belongs to the class-I aminoacyl-tRNA synthetase family. As to quaternary structure, monomer. Requires Zn(2+) as cofactor.

It is found in the cytoplasm. It catalyses the reaction tRNA(Cys) + L-cysteine + ATP = L-cysteinyl-tRNA(Cys) + AMP + diphosphate. The protein is Cysteine--tRNA ligase (cysS) of Rickettsia prowazekii (strain Madrid E).